The primary structure comprises 394 residues: Phosphoglycerate kinase (394 aa).

Substrate contacts are provided by residues 21 to 23 (DFN), arginine 36, 59 to 62 (HFGR), arginine 118, and arginine 151. Residues lysine 201, glutamate 323, and 349-352 (GGDS) each bind ATP.

It belongs to the phosphoglycerate kinase family. In terms of assembly, monomer.

Its subcellular location is the cytoplasm. It carries out the reaction (2R)-3-phosphoglycerate + ATP = (2R)-3-phospho-glyceroyl phosphate + ADP. It participates in carbohydrate degradation; glycolysis; pyruvate from D-glyceraldehyde 3-phosphate: step 2/5. In Brevibacillus brevis (strain 47 / JCM 6285 / NBRC 100599), this protein is Phosphoglycerate kinase.